Here is a 543-residue protein sequence, read N- to C-terminus: CTP synthase (543 aa).

An amidoligase domain region spans residues 1 to 265 (MARYIFITGG…DDEVLAAFGI (265 aa)). S13 contributes to the CTP binding site. Residue S13 participates in UTP binding. 14–19 (SLGKGL) lines the ATP pocket. Y54 serves as a coordination point for L-glutamine. Residue D71 participates in ATP binding. Mg(2+) is bound by residues D71 and E139. CTP is bound by residues 146-148 (DIE), 186-191 (KTKPTQ), and K222. Residues 186-191 (KTKPTQ) and K222 contribute to the UTP site. ATP is bound at residue 238-240 (RDA). In terms of domain architecture, Glutamine amidotransferase type-1 spans 291 to 542 (TIAIVGKYTG…IQAAVVQSRL (252 aa)). Residue G353 coordinates L-glutamine. C380 functions as the Nucleophile; for glutamine hydrolysis in the catalytic mechanism. Residues 381 to 384 (FGMQ), E404, and R470 each bind L-glutamine. Residues H515 and E517 contribute to the active site.

It belongs to the CTP synthase family. Homotetramer.

The catalysed reaction is UTP + L-glutamine + ATP + H2O = CTP + L-glutamate + ADP + phosphate + 2 H(+). The enzyme catalyses L-glutamine + H2O = L-glutamate + NH4(+). It catalyses the reaction UTP + NH4(+) + ATP = CTP + ADP + phosphate + 2 H(+). It participates in pyrimidine metabolism; CTP biosynthesis via de novo pathway; CTP from UDP: step 2/2. Allosterically activated by GTP, when glutamine is the substrate; GTP has no effect on the reaction when ammonia is the substrate. The allosteric effector GTP functions by stabilizing the protein conformation that binds the tetrahedral intermediate(s) formed during glutamine hydrolysis. Inhibited by the product CTP, via allosteric rather than competitive inhibition. Catalyzes the ATP-dependent amination of UTP to CTP with either L-glutamine or ammonia as the source of nitrogen. Regulates intracellular CTP levels through interactions with the four ribonucleotide triphosphates. This is CTP synthase from Nitrobacter winogradskyi (strain ATCC 25391 / DSM 10237 / CIP 104748 / NCIMB 11846 / Nb-255).